The following is a 158-amino-acid chain: GTP-dependent dephospho-CoA kinase (158 aa).

GTP contacts are provided by Asp35, Val36, Asp54, Lys56, Glu109, and Asp132.

It belongs to the GTP-dependent DPCK family.

The enzyme catalyses 3'-dephospho-CoA + GTP = GDP + CoA + H(+). Its pathway is cofactor biosynthesis; coenzyme A biosynthesis. Functionally, catalyzes the GTP-dependent phosphorylation of the 3'-hydroxyl group of dephosphocoenzyme A to form coenzyme A (CoA). The chain is GTP-dependent dephospho-CoA kinase from Methanococcus maripaludis (strain DSM 14266 / JCM 13030 / NBRC 101832 / S2 / LL).